The sequence spans 42 residues: Large ribosomal subunit protein bL36 (42 aa).

Belongs to the bacterial ribosomal protein bL36 family.

This is Large ribosomal subunit protein bL36 from Wolbachia pipientis subsp. Culex pipiens (strain wPip).